The following is a 618-amino-acid chain: Probable N-acetylgalactosaminyltransferase 6 (618 aa).

Residues 1–16 (MIASLIRSRRRSRRCV) are Cytoplasmic-facing. A helical; Signal-anchor for type II membrane protein transmembrane segment spans residues 17–39 (VYSVFLFGFLALWGSFALALVFL). At 40–618 (SDMYIGEDQI…TEMSWLPEHP (579 aa)) the chain is on the lumenal side. 2 N-linked (GlcNAc...) asparagine glycosylation sites follow: Asn81 and Asn149. Disulfide bonds link Cys147/Cys381 and Cys372/Cys452. Positions 156–267 (LPTTSVIIVY…KGWLEPLLTR (112 aa)) are catalytic subdomain A. 2 residues coordinate substrate: Asp197 and Arg228. Position 251 (Asp251) interacts with Mn(2+). Ser252 provides a ligand contact to substrate. His253 serves as a coordination point for Mn(2+). The interval 327-389 (PIESPTMAGG…PCSHVGHVFR (63 aa)) is catalytic subdomain B. Residue Trp358 coordinates substrate. His386 is a Mn(2+) binding site. Arg389 is a binding site for substrate. Positions 474–609 (RFGRMTSSSN…SNDRQNWTIT (136 aa)) constitute a Ricin B-type lectin domain. Asn483 carries N-linked (GlcNAc...) asparagine glycosylation. Intrachain disulfides connect Cys487/Cys505, Cys530/Cys550, and Cys575/Cys597. N-linked (GlcNAc...) asparagine glycosylation occurs at Asn605.

This sequence belongs to the glycosyltransferase 2 family. GalNAc-T subfamily. The cofactor is Mn(2+).

It is found in the golgi apparatus membrane. Its pathway is protein modification; protein glycosylation. Probable glycopeptide transferase involved in O-linked oligosaccharide biosynthesis. Glycopeptide transferases catalyze the transfer of an N-acetyl-D-galactosamine residue to an already glycosylated peptide. In contrast to other members of the family, it does not act as a peptide transferase that transfers GalNAc onto serine or threonine residue on peptides that have been tested. Some peptide transferase activity is however not excluded, considering that its appropriate peptide substrate may remain unidentified. The polypeptide is Probable N-acetylgalactosaminyltransferase 6 (gly-6) (Caenorhabditis elegans).